Reading from the N-terminus, the 623-residue chain is Membralin-like protein At1g60995 (623 aa).

A helical transmembrane segment spans residues 24–44; it reads GFLEYTYLFVAITLFCILVVM. Positions 99–119 are disordered; sequence SLEVSKTDQESSTSEENTDDT. 4 helical membrane-spanning segments follow: residues 315 to 335, 363 to 383, 392 to 412, and 424 to 444; these read GVLM…SFTL, IFVH…ILFF, LLAF…LISV, and FFLL…YGFS. Disordered regions lie at residues 506-567 and 602-623; these read NRTT…QAGA and EAQV…LSVD. The span at 514–531 shows a compositional bias: polar residues; sequence PSGPNHTTPNQNTETRSF.

The protein belongs to the membralin family.

The protein resides in the membrane. This is Membralin-like protein At1g60995 from Arabidopsis thaliana (Mouse-ear cress).